The primary structure comprises 249 residues: Tabinhibitin 4 (249 aa).

An N-terminal signal peptide occupies residues 1-23 (MTLNVYFVLLSPYSLQSVPLPLT). A Cell attachment site motif is present at residues 31–33 (RGD). Residues 64-207 (LQKTNWLRGV…LKRALFTCNF (144 aa)) enclose the SCP domain. Positions 220 to 222 (RGD) match the Cell attachment site motif.

It belongs to the CRISP family. As to expression, expressed in salivary glands.

It localises to the secreted. Inhibits platelet aggregation induced by all agonists tested (ADP, arachidonic acid, the thromboxane A2 analog U46619, thrombin, and snake venom snaclecs (TMVA that activates platelet through GPIB, and stejnulxin that specifically acts through GPVI (GP6))). May act by competing with fibrinogen for binding to glycoprotein IIb/IIIa (ITGA2B/ITGB3). This is Tabinhibitin 4 from Tabanus yao (Horsefly).